The primary structure comprises 131 residues: Small ribosomal subunit protein uS8 (131 aa).

The protein belongs to the universal ribosomal protein uS8 family. In terms of assembly, part of the 30S ribosomal subunit. Contacts proteins S5 and S12.

Its function is as follows. One of the primary rRNA binding proteins, it binds directly to 16S rRNA central domain where it helps coordinate assembly of the platform of the 30S subunit. The chain is Small ribosomal subunit protein uS8 from Paraburkholderia phymatum (strain DSM 17167 / CIP 108236 / LMG 21445 / STM815) (Burkholderia phymatum).